The following is a 563-amino-acid chain: Arginine--tRNA ligase (563 aa).

Residues 121 to 131 (PNIAKPFSIGH) carry the 'HIGH' region motif.

This sequence belongs to the class-I aminoacyl-tRNA synthetase family. In terms of assembly, monomer.

It is found in the cytoplasm. It catalyses the reaction tRNA(Arg) + L-arginine + ATP = L-arginyl-tRNA(Arg) + AMP + diphosphate. The chain is Arginine--tRNA ligase from Streptococcus pyogenes serotype M4 (strain MGAS10750).